The primary structure comprises 623 residues: MEGYHKPDQQKLQALKDTANRLRISSIQATTAAGSGHPTSCCSAAEIMAVLFFHTMRYKALDPRNPHNDRFVLSKGHAAPILYAVWAEAGFLPEAELLNLRKISSDLDGHPVPKQAFTDVATGSLGQGLGAACGMAYTGKYFDKASYRVYCMLGDGEVSEGSVWEAMAFAGIYKLDNLVAIFDINRLGQSDPAPLQHQVDIYQKRCEAFGWHTIIVDGHSVEELCKAFGQAKHQPTAIIAKTFKGRGITGIEDKEAWHGKPLPKNMAEQIIQEIYSQVQSKKKILATPPQEDAPSVDIANIRMPTPPSYKVGDKIATRKAYGLALAKLGHASDRIIALDGDTKNSTFSELFKKEHPDRFIECYIAEQNMVSIAVGCATRDRTVPFCSTFAAFFTRAFDQIRMAAISESNINLCGSHCGVSIGEDGPSQMALEDLAMFRSVPMSTVFYPSDGVATEKAVELAANTKGICFIRTSRPENAIIYSNNEDFQVGQAKVVLKSKDDQVTVIGAGVTLHEALAAAESLKKDKISIRVLDPFTIKPLDRKLILDSARATKGRILTVEDHYYEGGIGEAVSAAVVGEPGVTVTRLAVSQVPRSGKPAELLKMFGIDKDAIVQAVKGLVTKG.

Met-1 carries the post-translational modification N-acetylmethionine. N6-acetyllysine is present on residues Lys-6 and Lys-11. His-37 provides a ligand contact to substrate. Residues Ser-40 and His-77 each contribute to the thiamine diphosphate site. Ser-104 is subject to Phosphoserine. Residue 123-125 (GSL) coordinates thiamine diphosphate. Lys-144 is subject to N6-acetyllysine. Asp-155 is a Mg(2+) binding site. Thiamine diphosphate contacts are provided by Gly-156 and Asn-185. Mg(2+) contacts are provided by Asn-185 and Leu-187. An N6-acetyllysine mark is found at Lys-204, Lys-232, and Lys-241. Lys-244 and His-258 together coordinate thiamine diphosphate. His-258 contributes to the substrate binding site. Position 260 is an N6-acetyllysine (Lys-260). Residue Tyr-275 is modified to Phosphotyrosine. Thr-287 is subject to Phosphothreonine. Ser-295 bears the Phosphoserine mark. Substrate is bound by residues Arg-318 and Ser-345. Residue Ser-345 is modified to Phosphoserine. Lys-352 is covalently cross-linked (Glycyl lysine isopeptide (Lys-Gly) (interchain with G-Cter in SUMO2)). Glu-366 (proton donor) is an active-site residue. Phe-392 serves as a coordination point for thiamine diphosphate. Substrate is bound by residues His-416 and Asp-424. Position 428 (Gln-428) interacts with thiamine diphosphate. Arg-474 contacts substrate. N6-acetyllysine occurs at positions 538 and 603.

The protein belongs to the transketolase family. In terms of assembly, homodimer. Mg(2+) serves as cofactor. The cofactor is Ca(2+). Requires Mn(2+) as cofactor. Co(2+) is required as a cofactor. It depends on thiamine diphosphate as a cofactor.

It carries out the reaction D-sedoheptulose 7-phosphate + D-glyceraldehyde 3-phosphate = aldehydo-D-ribose 5-phosphate + D-xylulose 5-phosphate. Its function is as follows. Catalyzes the transfer of a two-carbon ketol group from a ketose donor to an aldose acceptor, via a covalent intermediate with the cofactor thiamine pyrophosphate. The sequence is that of Transketolase (Tkt) from Mus musculus (Mouse).